Consider the following 389-residue polypeptide: tRNA-specific 2-thiouridylase MnmA (389 aa).

ATP-binding positions include 9-16 (GMSGGVDS) and methionine 35. The interaction with target base in tRNA stretch occupies residues 95-97 (NPD). The active-site Nucleophile is the cysteine 100. Cysteine 100 and cysteine 196 are joined by a disulfide. Residue glycine 124 coordinates ATP. An interaction with tRNA region spans residues 146–148 (KDQ). The active-site Cysteine persulfide intermediate is cysteine 196. The segment at 308–309 (RY) is interaction with tRNA.

This sequence belongs to the MnmA/TRMU family.

The protein resides in the cytoplasm. It carries out the reaction S-sulfanyl-L-cysteinyl-[protein] + uridine(34) in tRNA + AH2 + ATP = 2-thiouridine(34) in tRNA + L-cysteinyl-[protein] + A + AMP + diphosphate + H(+). Its function is as follows. Catalyzes the 2-thiolation of uridine at the wobble position (U34) of tRNA, leading to the formation of s(2)U34. This chain is tRNA-specific 2-thiouridylase MnmA, found in Burkholderia ambifaria (strain MC40-6).